Consider the following 322-residue polypeptide: Rhomboid-like protein 16, chloroplastic (322 aa).

A chloroplast-targeting transit peptide spans 1-52 (MHAIFCRRVAVGCSSPQLTKLVTKQASQSRHSLSHLLPFDLSSRFVPPYVVS). The next 6 membrane-spanning stretches (helical) occupy residues 110-130 (WING…AVFT), 166-186 (FSHV…YFGA), 201-221 (YFAG…LSVI), 238-258 (IGKL…MLLY), 265-285 (FGLM…LNII), and 295-315 (TLTS…WARI).

Belongs to the peptidase S54 family.

The protein localises to the plastid. It is found in the chloroplast membrane. Its function is as follows. Rhomboid-type serine protease that catalyzes intramembrane proteolysis. May cleave the plastid translocon component Tic40. The polypeptide is Rhomboid-like protein 16, chloroplastic (Arabidopsis thaliana (Mouse-ear cress)).